We begin with the raw amino-acid sequence, 644 residues long: Threonine--tRNA ligase (644 aa).

One can recognise a TGS domain in the interval 1 to 61 (MKVSIEGSVV…TACETLEPVY (61 aa)). The interval 241-532 (DHRKLGTQLD…LTEHFAGAFP (292 aa)) is catalytic. Zn(2+) contacts are provided by Cys333, His384, and His509.

It belongs to the class-II aminoacyl-tRNA synthetase family. In terms of assembly, homodimer. Zn(2+) serves as cofactor.

Its subcellular location is the cytoplasm. It carries out the reaction tRNA(Thr) + L-threonine + ATP = L-threonyl-tRNA(Thr) + AMP + diphosphate + H(+). Catalyzes the attachment of threonine to tRNA(Thr) in a two-step reaction: L-threonine is first activated by ATP to form Thr-AMP and then transferred to the acceptor end of tRNA(Thr). Also edits incorrectly charged L-seryl-tRNA(Thr). This is Threonine--tRNA ligase from Oleidesulfovibrio alaskensis (strain ATCC BAA-1058 / DSM 17464 / G20) (Desulfovibrio alaskensis).